Here is a 393-residue protein sequence, read N- to C-terminus: Phospholipid-transporting ATPase accessory subunit CRF1 (393 aa).

At 1–46 (MGLILRWKEKKQLSSKQNAQKSRKPANTSFRQQRLKAWQPILSPQS) the chain is on the cytoplasmic side. The chain crosses the membrane as a helical span at residues 47-67 (VLPLLILMACVFAPIGIGLVV). The Lumenal segment spans residues 68–334 (STISVQRLVV…NSIIGAGNEA (267 aa)). Residues 70–332 (ISVQRLVVNY…TTNSIIGAGN (263 aa)) are confers specificity for binding DNF3. Asparagine 78, asparagine 123, asparagine 187, asparagine 202, asparagine 213, asparagine 240, and asparagine 291 each carry an N-linked (GlcNAc...) asparagine glycan. Cystine bridges form between cysteine 82–cysteine 126 and cysteine 179–cysteine 193. A helical transmembrane segment spans residues 335 to 355 (LGIVYLIVAGIATLFAILFLI). Over 356–393 (KVIFKPRPMHDHSYLNFENSDTPFDESSVVSIPLREIL) the chain is Cytoplasmic.

The protein belongs to the CDC50/LEM3 family. As to quaternary structure, component of a flippase complex consisting of DNF3 and YNR048W/CRF1. Interacts with DNF3; the interaction is direct and required for proper expression and endoplasmic reticulum (ER) export of either partner.

It is found in the golgi apparatus. The protein resides in the trans-Golgi network membrane. In terms of biological role, accessory component of a P4-ATPase flippase complex which catalyzes the hydrolysis of ATP coupled to the transport of phosphatidylcholine and small amounts of phosphatidylethanolamine from the lumen to the cytosolic leaflet of the trans-Golgi network and ensures the maintenance of asymmetric distribution of phospholipids. May be involved in transport from early endosomes to the trans-Golgi network (TGN). The polypeptide is Phospholipid-transporting ATPase accessory subunit CRF1 (Saccharomyces cerevisiae (strain ATCC 204508 / S288c) (Baker's yeast)).